A 103-amino-acid polypeptide reads, in one-letter code: Large ribosomal subunit protein bL21 (103 aa).

Belongs to the bacterial ribosomal protein bL21 family. In terms of assembly, part of the 50S ribosomal subunit. Contacts protein L20.

In terms of biological role, this protein binds to 23S rRNA in the presence of protein L20. This chain is Large ribosomal subunit protein bL21, found in Herminiimonas arsenicoxydans.